Here is a 402-residue protein sequence, read N- to C-terminus: Speedy protein E6 (402 aa).

A disordered region spans residues Met-1 to Glu-89. The segment covering Gly-16–Tyr-39 has biased composition (polar residues). The span at Asp-76–Glu-89 shows a compositional bias: acidic residues.

The protein belongs to the Speedy/Ringo family.

This is Speedy protein E6 (SPDYE6) from Homo sapiens (Human).